A 564-amino-acid chain; its full sequence is Efflux pump hmp6 (564 aa).

Positions 1 to 25 (MEKHAEPEKSLGDKEFQEKELHEKP) are enriched in basic and acidic residues. The interval 1–46 (MEKHAEPEKSLGDKEFQEKELHEKPAPAASEDISGDSSVNKEDGPD) is disordered. The next 8 helical transmembrane spans lie at 58–78 (LAVV…DTTI), 96–118 (VGWY…GKLY), 125–145 (IVFT…GVAP), 156–176 (IAGL…IHSV), 186–206 (GMIV…GGAF), 214–234 (WCFY…LFFF), 259–279 (FGTF…QMGG), and 289–309 (IIVL…VQFF). N-linked (GlcNAc...) asparagine glycosylation is found at N312 and N322. The next 4 membrane-spanning stretches (helical) occupy residues 330-350 (IYMF…PIWF), 361-383 (SGIR…GALV), 395-415 (ASVV…VDAS), and 452-472 (IGTA…VSAA).

This sequence belongs to the major facilitator superfamily. TCR/Tet family.

Its subcellular location is the cell membrane. Its function is as follows. Efflux pump that might be required for efficient secretion of hypothemycin or other secondary metabolies produced by the hypothemycin gene cluster. The polypeptide is Efflux pump hmp6 (Hypomyces subiculosus (Nectria subiculosa)).